Reading from the N-terminus, the 327-residue chain is ATP-dependent 6-phosphofructokinase (327 aa).

Residues Gly12, 73–74 (RL), and 103–106 (GDGS) each bind ATP. Asp104 provides a ligand contact to Mg(2+). 126-128 (TID) is a substrate binding site. The active-site Proton acceptor is the Asp128. Arg155 provides a ligand contact to ADP. Residues Arg163 and 170 to 172 (MGH) each bind substrate. Residues 186 to 188 (GAD) and 214 to 216 (KRS) contribute to the ADP site. Substrate is bound by residues Glu223, Arg245, and 251–254 (HTQR).

Belongs to the phosphofructokinase type A (PFKA) family. ATP-dependent PFK group I subfamily. Prokaryotic clade 'B1' sub-subfamily. As to quaternary structure, homotetramer. Mg(2+) is required as a cofactor.

It is found in the cytoplasm. It carries out the reaction beta-D-fructose 6-phosphate + ATP = beta-D-fructose 1,6-bisphosphate + ADP + H(+). It participates in carbohydrate degradation; glycolysis; D-glyceraldehyde 3-phosphate and glycerone phosphate from D-glucose: step 3/4. Its activity is regulated as follows. Allosterically activated by ADP and other diphosphonucleosides, and allosterically inhibited by phosphoenolpyruvate. Catalyzes the phosphorylation of D-fructose 6-phosphate to fructose 1,6-bisphosphate by ATP, the first committing step of glycolysis. In Spiroplasma citri, this protein is ATP-dependent 6-phosphofructokinase.